The chain runs to 337 residues: Dimethyladenosine transferase 1, mitochondrial (337 aa).

The N-terminal 84 residues, 1-84 (MSQVTARVLN…RSILRRQPQR (84 aa)), are a transit peptide targeting the mitochondrion. S-adenosyl-L-methionine-binding positions include 38 to 41 (QNFL), N39, L41, G67, E89, D118, and N140.

It belongs to the class I-like SAM-binding methyltransferase superfamily. rRNA adenine N(6)-methyltransferase family. KsgA subfamily.

The protein resides in the mitochondrion. Functionally, probable S-adenosyl-L-methionine-dependent methyltransferase which specifically dimethylates mitochondrial 12S rRNA at the conserved stem loop. The chain is Dimethyladenosine transferase 1, mitochondrial (mtTFB1) from Drosophila pseudoobscura pseudoobscura (Fruit fly).